We begin with the raw amino-acid sequence, 212 residues long: Uridine kinase (212 aa).

12-19 (GGSGGGKT) serves as a coordination point for ATP.

Belongs to the uridine kinase family.

The protein localises to the cytoplasm. It carries out the reaction uridine + ATP = UMP + ADP + H(+). The catalysed reaction is cytidine + ATP = CMP + ADP + H(+). It participates in pyrimidine metabolism; CTP biosynthesis via salvage pathway; CTP from cytidine: step 1/3. Its pathway is pyrimidine metabolism; UMP biosynthesis via salvage pathway; UMP from uridine: step 1/1. The chain is Uridine kinase from Streptococcus pneumoniae serotype 19F (strain G54).